The following is a 380-amino-acid chain: Cytochrome b (380 aa).

4 helical membrane passes run 33–53 (FGSL…FLAM), 77–98 (WIIR…FLHV), 113–133 (WNIG…GYVL), and 178–198 (FFTL…LHLL). His-83 and His-97 together coordinate heme b. Positions 182 and 196 each coordinate heme b. His-201 contributes to the a ubiquinone binding site. 4 consecutive transmembrane segments (helical) span residues 226–246 (TKDI…TLFS), 288–308 (LGGV…PILH), 320–340 (LSQL…WIGG), and 347–367 (FITI…ILMP).

The protein belongs to the cytochrome b family. In terms of assembly, the cytochrome bc1 complex contains 11 subunits: 3 respiratory subunits (MT-CYB, CYC1 and UQCRFS1), 2 core proteins (UQCRC1 and UQCRC2) and 6 low-molecular weight proteins (UQCRH/QCR6, UQCRB/QCR7, UQCRQ/QCR8, UQCR10/QCR9, UQCR11/QCR10 and a cleavage product of UQCRFS1). This cytochrome bc1 complex then forms a dimer. Heme b serves as cofactor.

It is found in the mitochondrion inner membrane. Its function is as follows. Component of the ubiquinol-cytochrome c reductase complex (complex III or cytochrome b-c1 complex) that is part of the mitochondrial respiratory chain. The b-c1 complex mediates electron transfer from ubiquinol to cytochrome c. Contributes to the generation of a proton gradient across the mitochondrial membrane that is then used for ATP synthesis. This chain is Cytochrome b (MT-CYB), found in Pan paniscus (Pygmy chimpanzee).